Consider the following 577-residue polypeptide: Beta-fructofuranosidase, insoluble isoenzyme 1 (577 aa).

Positions 1–22 are cleaved as a signal peptide; it reads MGTRLLALAPWLLLLLLQLAGA. Asp-63 is a catalytic residue. N-linked (GlcNAc...) asparagine glycans are attached at residues Asn-158, Asn-183, and Asn-333.

The protein belongs to the glycosyl hydrolase 32 family. As to expression, expressed in roots, leaves and flowers. Weakly expressed in seeds.

The protein resides in the secreted. Its subcellular location is the extracellular space. It localises to the apoplast. It is found in the cell wall. It carries out the reaction Hydrolysis of terminal non-reducing beta-D-fructofuranoside residues in beta-D-fructofuranosides.. Functionally, may play a role in sucrose partitioning during seed development and in stress response. The chain is Beta-fructofuranosidase, insoluble isoenzyme 1 (CIN1) from Oryza sativa subsp. japonica (Rice).